The following is a 37-amino-acid chain: MRVQASVKRLCRNCKIVRRKGVVRVICIDPRHKQRQG.

The protein belongs to the bacterial ribosomal protein bL36 family.

The polypeptide is Large ribosomal subunit protein bL36 (Aromatoleum aromaticum (strain DSM 19018 / LMG 30748 / EbN1) (Azoarcus sp. (strain EbN1))).